The chain runs to 672 residues: Transketolase (672 aa).

Histidine 35 contributes to the substrate binding site. Thiamine diphosphate contacts are provided by residues histidine 75 and glycine 124–leucine 126. Aspartate 162 contributes to the Mg(2+) binding site. 2 residues coordinate thiamine diphosphate: glycine 163 and asparagine 192. Mg(2+)-binding residues include asparagine 192 and isoleucine 194. Residues histidine 266, arginine 361, and serine 388 each coordinate substrate. Histidine 266 is a binding site for thiamine diphosphate. Residue glutamate 415 is the Proton donor of the active site. A thiamine diphosphate-binding site is contributed by phenylalanine 441. The substrate site is built by histidine 465, aspartate 473, and arginine 524.

It belongs to the transketolase family. In terms of assembly, homodimer. The cofactor is Mg(2+). It depends on Ca(2+) as a cofactor. Mn(2+) serves as cofactor. Requires Co(2+) as cofactor. Thiamine diphosphate is required as a cofactor.

It carries out the reaction D-sedoheptulose 7-phosphate + D-glyceraldehyde 3-phosphate = aldehydo-D-ribose 5-phosphate + D-xylulose 5-phosphate. It participates in carbohydrate biosynthesis; Calvin cycle. The protein operates within carbohydrate degradation; pentose phosphate pathway. Its function is as follows. Catalyzes the transfer of a two-carbon ketol group from a ketose donor to an aldose acceptor, via a covalent intermediate with the cofactor thiamine pyrophosphate. The protein is Transketolase (tktA) of Rhodobacter capsulatus (strain ATCC BAA-309 / NBRC 16581 / SB1003).